Here is a 488-residue protein sequence, read N- to C-terminus: MAAAAKATSGTKGVVRQVIGPVLDVEFPAGKLPRIYNALRIEGKNTAGQNIALTAEVQQLLGDHRIRAVAMSGTDGLVRGMEAVDTGAPISVPVGEGTLGRIMNVLGEPVDEQGPVKTDATAPIHRSAPKLTDLETKPKVFETGIKVIDLLAPYRQGGKVGLFGGAGMGKTVLIQELINNIAKEHGGVSVFGGVGERTREGNDLYEEFKDSGVINADDLSKSKVALCYGQMNEPPGARMRVGLSALTMAEHFRDVNKQDVLLFVDNIFRFVQAGSEVSALLGRMPSAVGYQPTLGTDVGELQERITSTLEGSITSIQAVYVPADDLTDPAPATTFAHLDATTVLSRGLASKGIYPAVDPLDSTSTMLQPAVVGDEHYKTARAVQSTLQRYKELQDIIAILGLDELSEDDRLTVDRARKVEKFLSQPFFVAEIFTGMPGQYVKLDETIKGFQMILSGELDDLPEAAFYLVGNIDQVKAKAEKIRSEAKG.

Position 164 to 171 (164 to 171 (GGAGMGKT)) interacts with ATP.

It belongs to the ATPase alpha/beta chains family. In terms of assembly, F-type ATPases have 2 components, CF(1) - the catalytic core - and CF(0) - the membrane proton channel. CF(1) has five subunits: alpha(3), beta(3), gamma(1), delta(1), epsilon(1). CF(0) has four main subunits: a(1), b(1), b'(1) and c(9-12).

Its subcellular location is the cellular thylakoid membrane. The catalysed reaction is ATP + H2O + 4 H(+)(in) = ADP + phosphate + 5 H(+)(out). Produces ATP from ADP in the presence of a proton gradient across the membrane. The catalytic sites are hosted primarily by the beta subunits. This Synechococcus sp. (strain RCC307) protein is ATP synthase subunit beta.